Reading from the N-terminus, the 100-residue chain is Large ribosomal subunit protein uL23 (100 aa).

This sequence belongs to the universal ribosomal protein uL23 family. In terms of assembly, part of the 50S ribosomal subunit. Contacts protein L29, and trigger factor when it is bound to the ribosome.

Its function is as follows. One of the early assembly proteins it binds 23S rRNA. One of the proteins that surrounds the polypeptide exit tunnel on the outside of the ribosome. Forms the main docking site for trigger factor binding to the ribosome. In Prochlorococcus marinus (strain MIT 9515), this protein is Large ribosomal subunit protein uL23.